The sequence spans 191 residues: COP9 signalosome complex subunit 8 (191 aa).

Residues 6–179 (MMAELDEKLL…VSLVPNEQQL (174 aa)) enclose the PCI domain.

It belongs to the CSN8 family. As to quaternary structure, component of the CSN complex, probably composed of cops1, cops2, cops3, cops4, cops5, cops6, cops7, cops8 and cops9.

Its subcellular location is the cytoplasm. It is found in the nucleus. In terms of biological role, component of the COP9 signalosome complex (CSN), a complex involved in various cellular and developmental processes. The CSN complex is an essential regulator of the ubiquitin (Ubl) conjugation pathway by mediating the deneddylation of the cullin subunits of E3 ligase complexes, leading to modify the Ubl ligase activity. This chain is COP9 signalosome complex subunit 8 (cops8), found in Danio rerio (Zebrafish).